We begin with the raw amino-acid sequence, 403 residues long: Histidine--tRNA ligase (403 aa).

It belongs to the class-II aminoacyl-tRNA synthetase family. As to quaternary structure, homodimer.

It localises to the cytoplasm. It catalyses the reaction tRNA(His) + L-histidine + ATP = L-histidyl-tRNA(His) + AMP + diphosphate + H(+). The sequence is that of Histidine--tRNA ligase from Sulfurovum sp. (strain NBC37-1).